A 97-amino-acid chain; its full sequence is ATP-dependent Clp protease adapter protein ClpS (97 aa).

This sequence belongs to the ClpS family. Binds to the N-terminal domain of the chaperone ClpA.

Functionally, involved in the modulation of the specificity of the ClpAP-mediated ATP-dependent protein degradation. The polypeptide is ATP-dependent Clp protease adapter protein ClpS (Nautilia profundicola (strain ATCC BAA-1463 / DSM 18972 / AmH)).